The primary structure comprises 942 residues: Alpha,alpha-trehalose-phosphate synthase [UDP-forming] 1 (942 aa).

The disordered stretch occupies residues 28-57 (REKRKSNRARNPNDVAGSSENSENDLRLEG). The tract at residues 92–559 (QRLLVVANRL…AETFVSELND (468 aa)) is glycosyltransferase. The interval 815–892 (DMPAIARSRP…LGNSRRPSPE (78 aa)) is disordered. 2 stretches are compositionally biased toward low complexity: residues 821 to 833 (RSRP…AKSS) and 841 to 867 (SKST…NKSS). Polar residues predominate over residues 879 to 888 (SNHSLGNSRR).

The protein in the N-terminal section; belongs to the glycosyltransferase 20 family. In the C-terminal section; belongs to the trehalose phosphatase family. In terms of tissue distribution, expressed in seedlings, leaves, roots, stems, flowers and siliques.

Its subcellular location is the vacuole. It is found in the secreted. It localises to the cell wall. The protein localises to the cytoplasm. The enzyme catalyses D-glucose 6-phosphate + UDP-alpha-D-glucose = alpha,alpha-trehalose 6-phosphate + UDP + H(+). In terms of biological role, required for normal embryo development, vegetative growth and transition to flowering. Regulates embryo growth, cell wall deposition, starch and sucrose degradation, but not cell differentiation. Involved in the regulation of glucose sensing and signaling genes during plant development. This is Alpha,alpha-trehalose-phosphate synthase [UDP-forming] 1 from Arabidopsis thaliana (Mouse-ear cress).